Reading from the N-terminus, the 293-residue chain is Ribosomal protein L11 methyltransferase (293 aa).

S-adenosyl-L-methionine-binding residues include Thr145, Gly166, Asp188, and Asn230.

It belongs to the methyltransferase superfamily. PrmA family.

It localises to the cytoplasm. The catalysed reaction is L-lysyl-[protein] + 3 S-adenosyl-L-methionine = N(6),N(6),N(6)-trimethyl-L-lysyl-[protein] + 3 S-adenosyl-L-homocysteine + 3 H(+). Methylates ribosomal protein L11. This chain is Ribosomal protein L11 methyltransferase, found in Escherichia coli (strain SMS-3-5 / SECEC).